The sequence spans 513 residues: Cytochrome P450 72A552 (513 aa).

Residues Glu-2 to Trp-22 traverse the membrane as a helical segment. Cys-460 serves as a coordination point for heme.

This sequence belongs to the cytochrome P450 family. It depends on heme as a cofactor.

It is found in the membrane. The catalysed reaction is oleanolate + reduced [NADPH--hemoprotein reductase] + O2 = hederagenin + oxidized [NADPH--hemoprotein reductase] + H2O + H(+). Its function is as follows. Catalyzes the oxidation of oleanolate at the C-23 position to form hederagenin. The polypeptide is Cytochrome P450 72A552 (Barbarea vulgaris (Yellow rocket)).